The chain runs to 82 residues: Sec-independent protein translocase protein TatA (82 aa).

A helical membrane pass occupies residues 1-21 (MGGISIWQLLIIAVIIVLLFG). The tract at residues 48–82 (SAKDAKKDADFVPQNLEKKEAETVEKQKQNDKEQA) is disordered.

Belongs to the TatA/E family. The Tat system comprises two distinct complexes: a TatABC complex, containing multiple copies of TatA, TatB and TatC subunits, and a separate TatA complex, containing only TatA subunits. Substrates initially bind to the TatABC complex, which probably triggers association of the separate TatA complex to form the active translocon.

It localises to the cell inner membrane. In terms of biological role, part of the twin-arginine translocation (Tat) system that transports large folded proteins containing a characteristic twin-arginine motif in their signal peptide across membranes. TatA could form the protein-conducting channel of the Tat system. The sequence is that of Sec-independent protein translocase protein TatA from Aliivibrio salmonicida (strain LFI1238) (Vibrio salmonicida (strain LFI1238)).